We begin with the raw amino-acid sequence, 361 residues long: C3a anaphylatoxin chemotactic receptor (361 aa).

The Extracellular segment spans residues 1 to 64 (MQQETQAPPL…FASSEVRVIS (64 aa)). 2 N-linked (GlcNAc...) asparagine glycosylation sites follow: Asn36 and Asn50. A helical membrane pass occupies residues 65-85 (LVVYCLTFLLGVPGNSFVIFI). At 86–96 (AGMKMKRTVNT) the chain is on the cytoplasmic side. A helical membrane pass occupies residues 97 to 117 (IWFLNLATADLLCCLSVPLTV). The Extracellular portion of the chain corresponds to 118-134 (AEILLDHHWPYGYAMCK). Cys133 and Cys210 are oxidised to a cystine. A helical transmembrane segment spans residues 135 to 155 (ILPSVIVISMFASVFTLNIIS). Residues 156–177 (LDRFTQVITPVWAQNHRSLLLA) are Cytoplasmic-facing. Residues 178-198 (RLSCVAVWILALLLSLPFMIL) traverse the membrane as a helical segment. The Extracellular segment spans residues 199–224 (RRTYEEFNMTVCTFDDDDFTTYGALS). Residues 225-245 (IVRFVFGFLIPLMSIVTCYGI) form a helical membrane-spanning segment. The Cytoplasmic segment spans residues 246–262 (IARKLGSRHFRSGRAFR). Residues 263 to 283 (IMLAVIVAFFLCWMPYHVLDL) traverse the membrane as a helical segment. Topologically, residues 284–301 (IRSYGGESSSMVALKVDP) are extracellular. The helical transmembrane segment at 302–322 (LAISLAYVNSCLNPVLYVFMG) threads the bilayer. Residues 323 to 361 (QDFKNKVQLSLRRVFERAFSEEGTQISRSTQSQQVHSVL) are Cytoplasmic-facing.

Belongs to the G-protein coupled receptor 1 family.

Its subcellular location is the cell membrane. Functionally, receptor for the chemotactic and inflammatory peptide anaphylatoxin C3a. This receptor stimulates chemotaxis, granule enzyme release and superoxide anion production. This is C3a anaphylatoxin chemotactic receptor (c3ar1) from Danio rerio (Zebrafish).